Reading from the N-terminus, the 1343-residue chain is Kinesin-like protein KIF7 (1343 aa).

The Kinesin motor domain maps to proline 15 to isoleucine 349. Glycine 94–threonine 101 contacts ATP. Disordered stretches follow at residues asparagine 356–threonine 382, arginine 451–aspartate 483, and glutamate 611–leucine 639. Positions arginine 358–glycine 479 are interaction with DLG5. Residues arginine 358–glutamate 1206 form an interaction with SMO region. Residues arginine 480 to arginine 542 adopt a coiled-coil conformation. The tract at residues alanine 513–glutamine 775 is sufficient for interaction with NPHP1. Coiled-coil stretches lie at residues alanine 698–glutamate 1057 and threonine 1109–leucine 1211. The residue at position 898 (serine 898) is a Phosphoserine. Disordered regions lie at residues histidine 1219–asparagine 1238 and glycine 1310–leucine 1343.

Belongs to the TRAFAC class myosin-kinesin ATPase superfamily. Kinesin family. KIF27 subfamily. Can form homodimers and interacts with microtubules. Interacts with GLI1, GLI2, GLI3, SMO and SUFU. Interacts with NPHP1. Interacts with SMO and DLG5 (via PDZ4 or guanylate kinase-like domain). In terms of processing, polyubiquitinated by UBR3. Embryonic stem cells, melanotic melanoma and Jurkat T-cells. Expressed in heart, lung, liver, kidney, testis, retina, placenta, pancreas, colon, small intestin, prostate and thymus.

It localises to the cell projection. Its subcellular location is the cilium. The protein localises to the cytoplasm. The protein resides in the cytoskeleton. It is found in the cilium basal body. In terms of biological role, essential for hedgehog signaling regulation: acts both as a negative and positive regulator of sonic hedgehog (Shh) and Indian hedgehog (Ihh) pathways, acting downstream of SMO, through both SUFU-dependent and -independent mechanisms. Involved in the regulation of microtubular dynamics. Required for proper organization of the ciliary tip and control of ciliary localization of SUFU-GLI2 complexes. Required for localization of GLI3 to cilia in response to Shh. Negatively regulates Shh signaling by preventing inappropriate activation of the transcriptional activator GLI2 in the absence of ligand. Positively regulates Shh signaling by preventing the processing of the transcription factor GLI3 into its repressor form. In keratinocytes, promotes the dissociation of SUFU-GLI2 complexes, GLI2 nuclear translocation and Shh signaling activation. Involved in the regulation of epidermal differentiation and chondrocyte development. The protein is Kinesin-like protein KIF7 (KIF7) of Homo sapiens (Human).